The chain runs to 223 residues: Putative nudix hydrolase 2 (223 aa).

In terms of domain architecture, Nudix hydrolase spans 72 to 213; the sequence is ASADGVSIIA…SIVVESTLLA (142 aa). Residues 111 to 132 carry the Nudix box motif; it reads GLIDAGETAQQAAIRELKEETG. Mg(2+) is bound by residues Glu-126 and Glu-130.

Belongs to the Nudix hydrolase family. Mg(2+) is required as a cofactor. Requires Mn(2+) as cofactor.

Functionally, probably mediates the hydrolysis of some nucleoside diphosphate derivatives. The protein is Putative nudix hydrolase 2 (ndx-2) of Caenorhabditis elegans.